Consider the following 416-residue polypeptide: Enterobactin exporter EntS (416 aa).

Over 1-21 (MNKQSWLLNLSLLKTHPAFRA) the chain is Cytoplasmic. Residues 22–42 (VFLARFISIVSLGLLGVAVPV) form a helical membrane-spanning segment. Residues 43–55 (QIQMMTHSTWQVG) lie on the Periplasmic side of the membrane. A helical transmembrane segment spans residues 56-76 (LSVTLTGGAMFVGLMVGGVLA). At 77 to 83 (DRYERKK) the chain is on the cytoplasmic side. A helical membrane pass occupies residues 84–104 (VILLARGTCGIGFIGLCLNAL). At 105-109 (LPEPS) the chain is on the periplasmic side. The helical transmembrane segment at 110-130 (LLAIYLLGLWDGFFASLGVTA) threads the bilayer. The Cytoplasmic portion of the chain corresponds to 131 to 156 (LLAATPALVGRENLMQAGAITMLTVR). The helical transmembrane segment at 157–177 (LGSVISPMIGGLLLATGGVAW) threads the bilayer. A topological domain (periplasmic) is located at residue asparagine 178. A helical transmembrane segment spans residues 179–199 (YGLAAAGTFITLLPLLSLPAL). The Cytoplasmic portion of the chain corresponds to 200 to 218 (PPPPQPREHPLKSLLAGFR). The chain crosses the membrane as a helical span at residues 219–239 (FLLASPLVGGIALLGGLLTMA). Residues 240 to 256 (SAVRVLYPALADNWQMS) lie on the Periplasmic side of the membrane. A helical transmembrane segment spans residues 257 to 277 (AAQIGFLYAAIPLGAAIGALT). At 278–287 (SGKLAHSVRP) the chain is on the cytoplasmic side. A helical membrane pass occupies residues 288–307 (GLLMLLSTLGAFLAISLFGL). At 308–313 (MPMWIL) the chain is on the periplasmic side. A helical transmembrane segment spans residues 314–336 (GVVCLALFGWLSAVSSLLQYTML). Over 337–356 (QTQTPEAMLGRINGLWTAQN) the chain is Cytoplasmic. Residues 357-377 (VTGDAIGAALLGGLGAMMTPV) traverse the membrane as a helical segment. Residue alanine 378 is a topological domain, periplasmic. A helical membrane pass occupies residues 379–399 (SASASGFGLLIIGVLLLLVLV). Residues 400-416 (ELRRFRQTPPQVTASDS) are Cytoplasmic-facing.

It belongs to the major facilitator superfamily. EntS (TC 2.A.1.38) family.

Its subcellular location is the cell inner membrane. Its function is as follows. Component of an export pathway for enterobactin. This Escherichia coli O45:K1 (strain S88 / ExPEC) protein is Enterobactin exporter EntS.